Here is a 591-residue protein sequence, read N- to C-terminus: V-type ATP synthase alpha chain (591 aa).

233–240 (GPFGAGKT) serves as a coordination point for ATP.

Belongs to the ATPase alpha/beta chains family.

The catalysed reaction is ATP + H2O + 4 H(+)(in) = ADP + phosphate + 5 H(+)(out). In terms of biological role, produces ATP from ADP in the presence of a proton gradient across the membrane. The V-type alpha chain is a catalytic subunit. The chain is V-type ATP synthase alpha chain from Streptococcus pyogenes serotype M49 (strain NZ131).